Consider the following 465-residue polypeptide: Indoleacetamide hydrolase (465 aa).

A disordered region spans residues 1 to 40 (MVRGRHRSRDPQRRDLRGRDRRSASRTDARRQSAAERGCR). Basic and acidic residues predominate over residues 9–39 (RDPQRRDLRGRDRRSASRTDARRQSAAERGC). Residue S149 is the Charge relay system of the active site. The active-site Acyl-ester intermediate is the S173.

Belongs to the amidase family.

Its pathway is plant hormone metabolism; auxin biosynthesis. Functionally, hydrolyzes indole-3-acetamide (IAM) into indole-3-acetic acid (IAA). The protein is Indoleacetamide hydrolase (bam) of Bradyrhizobium japonicum.